The following is a 334-amino-acid chain: Guanine nucleotide-binding protein subunit beta-like protein (334 aa).

WD repeat units lie at residues Gly-14–Phe-55, Gly-65–Leu-104, Gly-106–Met-145, Met-152–Thr-192, Asp-215–Asp-256, and Ala-257–Ser-294.

This sequence belongs to the WD repeat G protein beta family.

This Encephalitozoon cuniculi (strain GB-M1) (Microsporidian parasite) protein is Guanine nucleotide-binding protein subunit beta-like protein.